Here is a 483-residue protein sequence, read N- to C-terminus: GTPase Der (483 aa).

EngA-type G domains follow at residues 3 to 167 and 212 to 387; these read FTLA…GEER and LRIA…EIWN. Residues 9 to 16, 56 to 60, 119 to 122, 218 to 225, 265 to 269, and 330 to 333 each bind GTP; these read GRPNVGKS, DTAGL, NKAE, GRPNAGKS, DTAGM, and NKWD. The KH-like domain occupies 388–472; the sequence is RRISTGRLNR…PIRLSLRTSD (85 aa).

Belongs to the TRAFAC class TrmE-Era-EngA-EngB-Septin-like GTPase superfamily. EngA (Der) GTPase family. Associates with the 50S ribosomal subunit.

Its function is as follows. GTPase that plays an essential role in the late steps of ribosome biogenesis. In Brucella suis biovar 1 (strain 1330), this protein is GTPase Der.